The following is a 383-amino-acid chain: MGKPRPHKKKASKTREKSVLSAGGSISKRKMNEDPRKLLEQATILLQTGQADAALSIAQQALEIATSNSPAQLSSLNTIAEIYVELGEIDLARKHFLQAVELDPTGSIPESEGGGAEKFLWLAQLSELGGKDSVQWFEKGVGALRGIFRRSPLFFIAFSRASYQADIFRWEEDAESRCENLITEALLVQPSSPEVLQTLASIRISQLREDDARAALSRSLELWKDLPPEDPHVPDFPTRISLSRLLMEVSMLLEALEVLERLILEDDQSVEAWYLGGWCLQLLAEIGEAPRDPEAESNETPESKRHASLVASREWLKQSLMLYDLVQYEDERLKEHALELVEAMNKELGEEMEDDSNVEDGEGEGEEEWEGIESDSDHEMADS.

A compositionally biased stretch (basic residues) spans M1–S12. Residues M1–E33 are disordered. TPR repeat units lie at residues P35–N68, L73–G106, A116–I147, and P193–L226. A disordered region spans residues N345–S383. Residues E350–S374 show a composition bias toward acidic residues.

It belongs to the ACL4 family.

It is found in the cytoplasm. The protein localises to the nucleus. Acts as a chaperone for the L4 ribosomal subunit, required for hierarchical ribosome assembly. Shields ribosomal protein L4 until timely release and insertion into the pre-ribosome is possible, once ribosomal protein L18 is present. In Emericella nidulans (strain FGSC A4 / ATCC 38163 / CBS 112.46 / NRRL 194 / M139) (Aspergillus nidulans), this protein is Probable assembly chaperone of rpl4.